The following is a 341-amino-acid chain: Ferredoxin--NADP reductase (341 aa).

FAD is bound by residues Glu36, Gln44, Phe49, Val89, Phe123, Asp289, and Thr329.

Belongs to the ferredoxin--NADP reductase type 2 family. In terms of assembly, homodimer. FAD is required as a cofactor.

It catalyses the reaction 2 reduced [2Fe-2S]-[ferredoxin] + NADP(+) + H(+) = 2 oxidized [2Fe-2S]-[ferredoxin] + NADPH. This is Ferredoxin--NADP reductase from Ligilactobacillus salivarius (strain UCC118) (Lactobacillus salivarius).